The chain runs to 194 residues: Thymidylate kinase (194 aa).

7 to 14 (GVDGVGKS) lines the ATP pocket.

The protein belongs to the thymidylate kinase family.

It carries out the reaction dTMP + ATP = dTDP + ADP. Functionally, phosphorylation of dTMP to form dTDP in both de novo and salvage pathways of dTTP synthesis. The polypeptide is Thymidylate kinase (Campylobacter curvus (strain 525.92)).